Consider the following 297-residue polypeptide: 3-mercaptopyruvate sulfurtransferase (297 aa).

Alanine 2 carries the N-acetylalanine modification. Phosphoserine occurs at positions 3, 15, 23, and 35. Positions 25–144 constitute a Rhodanese 1 domain; sequence AGQPLQLLDA…WLRQNLPLSS (120 aa). Lysine 40 is subject to N6-acetyllysine; alternate. At lysine 40 the chain carries N6-succinyllysine; alternate. The tract at residues 145–160 is hinge; sequence GKSQPAPAEFRAQLDP. N6-succinyllysine occurs at positions 146 and 164. The Rhodanese 2 domain maps to 174-288; the sequence is ESRRFQVVDS…WYMRARPEDV (115 aa). Arginine 188 contributes to the substrate binding site. The active-site Cysteine persulfide intermediate is the cysteine 248.

Monomer (active form). Homodimer; disulfide-linked (inactive form).

The protein localises to the cytoplasm. The protein resides in the mitochondrion. It is found in the synapse. It localises to the synaptosome. It catalyses the reaction 2-oxo-3-sulfanylpropanoate + [thioredoxin]-dithiol = [thioredoxin]-disulfide + hydrogen sulfide + pyruvate + H(+). By oxidative stress, and thioredoxin. Under oxidative stress conditions, the catalytic cysteine site is converted to a sulfenate which inhibits the MPST enzyme activity. Reduced thioredoxin cleaves an intersubunit disulfide bond to turn on the redox switch and reactivate the enzyme. In terms of biological role, transfer of a sulfur ion to cyanide or to other thiol compounds. Also has weak rhodanese activity. Detoxifies cyanide and is required for thiosulfate biosynthesis. Acts as an antioxidant. In combination with cysteine aminotransferase (CAT), contributes to the catabolism of cysteine and is an important producer of hydrogen sulfide in the brain, retina and vascular endothelial cells. Hydrogen sulfide H(2)S is an important synaptic modulator, signaling molecule, smooth muscle contractor and neuroprotectant. Its production by the 3MST/CAT pathway is regulated by calcium ions. The protein is 3-mercaptopyruvate sulfurtransferase (MPST) of Homo sapiens (Human).